The primary structure comprises 539 residues: Phosphoenolpyruvate carboxykinase (ATP) (539 aa).

Substrate-binding residues include R64, Y206, and K212. ATP contacts are provided by residues K212, H231, and 247–255; that span reads GLSGTGKTT. Residues K212 and H231 each contribute to the Mn(2+) site. A Mn(2+)-binding site is contributed by D268. ATP contacts are provided by residues E296, R332, 448-449, and T454; that span reads RI. R332 is a binding site for substrate.

Belongs to the phosphoenolpyruvate carboxykinase (ATP) family. As to quaternary structure, monomer. Requires Mn(2+) as cofactor.

The protein localises to the cytoplasm. The catalysed reaction is oxaloacetate + ATP = phosphoenolpyruvate + ADP + CO2. Its pathway is carbohydrate biosynthesis; gluconeogenesis. In terms of biological role, involved in the gluconeogenesis. Catalyzes the conversion of oxaloacetate (OAA) to phosphoenolpyruvate (PEP) through direct phosphoryl transfer between the nucleoside triphosphate and OAA. In Cronobacter sakazakii (strain ATCC BAA-894) (Enterobacter sakazakii), this protein is Phosphoenolpyruvate carboxykinase (ATP).